Reading from the N-terminus, the 716-residue chain is Macrophage-expressed gene 1 protein (716 aa).

An N-terminal signal peptide occupies residues 1 to 20; that stretch reads MNNFRATILFWAVAAWVTSG. One can recognise an MACPF domain in the interval 30-345; that stretch reads GVQKCKNALK…TAVKRYYTFN (316 aa). A disulfide bridge links Cys-34 with Cys-70. Transmembrane regions (beta stranded) follow at residues 113 to 120 and 127 to 132; these read YSINTELS and GKFSTE. Asn-168 and Asn-185 each carry an N-linked (GlcNAc...) asparagine glycan. A run of 2 beta stranded transmembrane segments spans residues 235 to 244 and 248 to 256; these read AVTASAGLAF and VNFKFEENY. An N-linked (GlcNAc...) asparagine glycan is attached at Asn-269. Cys-350 and Cys-369 are joined by a disulfide. Residue Asn-375 is glycosylated (N-linked (GlcNAc...) asparagine). 5 disulfides stabilise this stretch: Cys-385–Cys-397, Cys-435–Cys-449, Cys-439–Cys-445, Cys-534–Cys-572, and Cys-557–Cys-577. The segment at 413-656 is P2; it reads PSGYSPVRLL…GDGGGLSGGA (244 aa). Residues 656–676 traverse the membrane as a helical segment; that stretch reads AAAGVTLGVTTILAVVITLAI. The segment at 693–716 is disordered; sequence RQSLVPGTAATGDTTYQEQGQSPA. The segment covering 703-716 has biased composition (polar residues); sequence TGDTTYQEQGQSPA.

Belongs to the MPEG1 family. Homooligomer; predominantly forms a homooligomeric arc-shaped pore complex instead of complete rings of 16 subunits. Proteolytically processed in two steps to generate the Macrophage-expressed gene 1 protein, processed form: cleaved by trypsin in proximity of the helical transmembrane domain releases the ectodomain into the lysosomal lumen to orient the pore-forming domain toward the endogenous membranes, and processed by the asparagine endopeptidase (LGMN). Proteolytic processing in antigen-containing vesicles is pH-dependent. Post-translationally, monoubiquitinated in response to bacterial infection; ubiquitination is required for vesicular localization and antibacterial activity and can be blocked by bacterial cell cycle inhibiting factor (cif).

Its subcellular location is the cytoplasmic vesicle membrane. The protein resides in the cytoplasmic vesicle. The protein localises to the phagosome membrane. Forms arc- and ring-shaped pre-pores on top of the membrane at neutral to slightly acidic pH conditions and converts to pores upon acidification. Undergoes transition from the pre-pore to the pore in a processive clockwise hand-over-hand process. In the pore state, 2 alpha-helical regions refold into transmembrane hairpins (TMH1 and TMH2) in each protomer that form in the ensemble complex giant beta-barrel transmembrane pores. Its function is as follows. Pore-forming protein involved in both innate and adaptive immunity. Plays a central role in antigen cross-presentation in dendritic cells by forming a pore in antigen-containing compartments, thereby promoting delivery of antigens for cross-presentation. Also involved in innate immune response following bacterial infection; shows antibacterial activity against a wide spectrum of Gram-positive, Gram-negative and acid-fast bacteria. Reduces the viability of the intracytosolic pathogen L.monocytogenes by inhibiting acidification of the phagocytic vacuole of host cells which restricts bacterial translocation from the vacuole to the cytosol. Required for the antibacterial activity of reactive oxygen species and nitric oxide. Functionally, pore-forming protein that plays a central role in antigen cross-presentation in dendritic cells by mediating delivery of antigens for cross-presentation. Dendritic cells bridge innate and adaptive immunity by capturing exogenous antigens on MHC class-I molecules and presenting them to naive CD8(+) T-cells. Acts by forming a pore in antigen-containing compartments, promoting the release of antigens into the cytosol, enabling generation of MHCI:peptide complexes and T-cell priming. This chain is Macrophage-expressed gene 1 protein (MPEG1), found in Pongo abelii (Sumatran orangutan).